Consider the following 270-residue polypeptide: uncharacterized protein (270 aa).

This is an uncharacterized protein from Escherichia coli (strain K12).